The primary structure comprises 397 residues: Enoyl-[acyl-carrier-protein] reductase [NADH] (397 aa).

NAD(+) contacts are provided by residues 48-53 (GASTGY), 74-75 (FE), 111-112 (DA), and 139-140 (LA). Tyr225 is a binding site for substrate. Residue Tyr235 is the Proton donor of the active site. NAD(+) contacts are provided by residues Lys244 and 273–275 (VVT).

Belongs to the TER reductase family. Monomer.

It catalyses the reaction a 2,3-saturated acyl-[ACP] + NAD(+) = a (2E)-enoyl-[ACP] + NADH + H(+). It participates in lipid metabolism; fatty acid biosynthesis. In terms of biological role, involved in the final reduction of the elongation cycle of fatty acid synthesis (FAS II). Catalyzes the reduction of a carbon-carbon double bond in an enoyl moiety that is covalently linked to an acyl carrier protein (ACP). The sequence is that of Enoyl-[acyl-carrier-protein] reductase [NADH] from Edwardsiella ictaluri (strain 93-146).